A 519-amino-acid chain; its full sequence is Cytochrome P450 52E2 (519 aa).

2 consecutive transmembrane segments (helical) span residues 10–30 and 44–64; these read MLGG…FYFI and PIFF…NAWF. A heme-binding site is contributed by C461.

The protein belongs to the cytochrome P450 family. Heme is required as a cofactor.

It is found in the membrane. Its function is as follows. Together with an NADPH cytochrome P450 the enzyme system catalyzes the terminal hydroxylation as the first step in the assimilation of alkanes and fatty acids. The chain is Cytochrome P450 52E2 (CYP52E2) from Candida apicola (Yeast).